A 1305-amino-acid chain; its full sequence is Contactin-associated protein like 5-1 (1305 aa).

An N-terminal signal peptide occupies residues 1–24; that stretch reads MDSLQRLNGLLTLVLSALWHLGLT. One can recognise an F5/8 type C domain in the interval 25 to 174; it reads ASNYNCDDPL…IGMRVEAYGC (150 aa). Laminin G-like domains lie at 180-360 and 367-544; these read VADF…TFSC and PITF…IDLC. The N-linked (GlcNAc...) asparagine glycan is linked to N282. Cysteines 329 and 360 form a disulfide. N496 carries an N-linked (GlcNAc...) asparagine glycan. 3 cysteine pairs are disulfide-bonded: C512–C544, C550–C561, and C555–C570. The 38-residue stretch at 546–583 folds into the EGF-like 1 domain; sequence IKDRCLPNYCEHGGHCAQTWTTFYCNCSDTGYTGATCH. An N-linked (GlcNAc...) asparagine glycan is attached at N571. The cysteines at positions 572 and 582 are disulfide-linked. The region spanning 584-790 is the Fibrinogen C-terminal domain; it reads DSIYEQSCEV…LRCNGDRHFW (207 aa). The N-linked (GlcNAc...) asparagine glycan is linked to N622. Residues 791 to 956 form the Laminin G-like 3 domain; that stretch reads NAVSFSTEAS…KLMSGVTPGC (166 aa). 4 disulfides stabilise this stretch: C929-C956, C960-C973, C967-C982, and C984-C994. The region spanning 957 to 995 is the EGF-like 2 domain; the sequence is PGHCSSYSSNCHNGGKCVEKQSGYSCDCTNSPNEGPFCQ. The Laminin G-like 4 domain maps to 1014-1198; that stretch reads EPYLVIKNTS…VHGTLTESGC (185 aa). N-linked (GlcNAc...) asparagine glycosylation occurs at N1057. C1163 and C1198 are joined by a disulfide. A helical membrane pass occupies residues 1238 to 1258; it reads VIGGIIAVVTFVTFCVIGIMI.

This sequence belongs to the neurexin family.

Its subcellular location is the membrane. Its function is as follows. May play a role in the correct development and proper functioning of the peripheral and central nervous system and be involved in cell adhesion and intercellular communication. The protein is Contactin-associated protein like 5-1 (Cntnap5a) of Rattus norvegicus (Rat).